The following is an 85-amino-acid chain: Small ribosomal subunit protein bS16c (85 aa).

This sequence belongs to the bacterial ribosomal protein bS16 family.

It is found in the plastid. The protein localises to the chloroplast. The chain is Small ribosomal subunit protein bS16c from Agrostis stolonifera (Creeping bentgrass).